A 507-amino-acid chain; its full sequence is MISAGEVLKVIKERIENFDGQVKCESVGEVISVKDGIALVYGLEKAKFGEVVAFANGTIGVVLNLDCDTVSIVIFGSENSVGEGDIVKCTNQLMDVPVGLELLGRVVDALGNPIDGLENFDTKTRLPVEIKAPGIIDRQSVTEPLQTGIKVIDMLIPIGRGQRELIIGDRKTGKTAIAIDTIINQKSHNNEVIDKEKVYCIYVAIGQKNSSVARIINKLRESGALEYTIVVVAGASDSASLQYLAPYTACAMGEFFRDNGMHCLIVYDDLSKHAAAYRQMSLLLRRPPGREAYPGDVFFLHSRLLERAAKMSDKKGGGSLTALPIIETQAGDVSAYVPTNVISITDGQIFLESEIFYKGLRPAVNVGLSVSRVGSSAQIKSVKKVAGSIKLSLAQYRELEDFAKFGSDVDVHSQKILDRGRRMMELLKQKQYSPLSVGEQVAVIFAGTSGYLDDISVNDISKFEERLLSELNSNYPDILSSISNNNFTDDIRSLLSKVISKIASSLK.

Position 168–175 (168–175) interacts with ATP; that stretch reads GDRKTGKT.

The protein belongs to the ATPase alpha/beta chains family. As to quaternary structure, F-type ATPases have 2 components, CF(1) - the catalytic core - and CF(0) - the membrane proton channel. CF(1) has five subunits: alpha(3), beta(3), gamma(1), delta(1), epsilon(1). CF(0) has three main subunits: a(1), b(2) and c(9-12). The alpha and beta chains form an alternating ring which encloses part of the gamma chain. CF(1) is attached to CF(0) by a central stalk formed by the gamma and epsilon chains, while a peripheral stalk is formed by the delta and b chains.

The protein resides in the cell inner membrane. The catalysed reaction is ATP + H2O + 4 H(+)(in) = ADP + phosphate + 5 H(+)(out). In terms of biological role, produces ATP from ADP in the presence of a proton gradient across the membrane. The alpha chain is a regulatory subunit. In Ehrlichia ruminantium (strain Gardel), this protein is ATP synthase subunit alpha.